Reading from the N-terminus, the 58-residue chain is Large ribosomal subunit protein uL30 (58 aa).

The protein belongs to the universal ribosomal protein uL30 family. In terms of assembly, part of the 50S ribosomal subunit.

This chain is Large ribosomal subunit protein uL30, found in Pseudomonas putida (strain ATCC 700007 / DSM 6899 / JCM 31910 / BCRC 17059 / LMG 24140 / F1).